The primary structure comprises 210 residues: FMN-dependent NADH:quinone oxidoreductase 9 (210 aa).

FMN-binding positions include serine 10 and 16–18; that span reads SAS.

This sequence belongs to the azoreductase type 1 family. In terms of assembly, homodimer. FMN is required as a cofactor.

The enzyme catalyses 2 a quinone + NADH + H(+) = 2 a 1,4-benzosemiquinone + NAD(+). It catalyses the reaction N,N-dimethyl-1,4-phenylenediamine + anthranilate + 2 NAD(+) = 2-(4-dimethylaminophenyl)diazenylbenzoate + 2 NADH + 2 H(+). Its function is as follows. Quinone reductase that provides resistance to thiol-specific stress caused by electrophilic quinones. Also exhibits azoreductase activity. Catalyzes the reductive cleavage of the azo bond in aromatic azo compounds to the corresponding amines. The protein is FMN-dependent NADH:quinone oxidoreductase 9 of Burkholderia lata (strain ATCC 17760 / DSM 23089 / LMG 22485 / NCIMB 9086 / R18194 / 383).